The following is an 81-amino-acid chain: MSHSVKIYDTCIGCTQCVRACPLDVLEMVPWDGCKAGQIASSPRTEDCVGCKRCETACPTDFLSIRVYLGAETTRSMGLAY.

2 consecutive 4Fe-4S ferredoxin-type domains span residues 2–31 and 37–68; these read SHSVKIYDTCIGCTQCVRACPLDVLEMVPW and GQIASSPRTEDCVGCKRCETACPTDFLSIRVY. 8 residues coordinate [4Fe-4S] cluster: Cys-11, Cys-14, Cys-17, Cys-21, Cys-48, Cys-51, Cys-54, and Cys-58.

As to quaternary structure, the cyanobacterial PSI reaction center is composed of one copy each of PsaA,B,C,D,E,F,I,J,K,L,M and X, and forms trimeric complexes. The cofactor is [4Fe-4S] cluster.

Its subcellular location is the cellular thylakoid membrane. It catalyses the reaction reduced [plastocyanin] + hnu + oxidized [2Fe-2S]-[ferredoxin] = oxidized [plastocyanin] + reduced [2Fe-2S]-[ferredoxin]. Functionally, apoprotein for the two 4Fe-4S centers FA and FB of photosystem I (PSI); essential for photochemical activity. FB is the terminal electron acceptor of PSI, donating electrons to ferredoxin. The C-terminus interacts with PsaA/B/D and helps assemble the protein into the PSI complex. Required for binding of PsaD and PsaE to PSI. PSI is a plastocyanin/cytochrome c6-ferredoxin oxidoreductase, converting photonic excitation into a charge separation, which transfers an electron from the donor P700 chlorophyll pair to the spectroscopically characterized acceptors A0, A1, FX, FA and FB in turn. Its function is as follows. Mutant proteins with a 3Fe-4S center are not observed bound to PSI in vitro, and are probably not able to do so in vivo. This Picosynechococcus sp. (strain ATCC 27264 / PCC 7002 / PR-6) (Agmenellum quadruplicatum) protein is Photosystem I iron-sulfur center (psaC).